A 72-amino-acid polypeptide reads, in one-letter code: SRY-related protein AES2 (72 aa).

A DNA-binding region (HMG box) is located at residues 1–69 (VKRPMNAFMV…KHMADYPDYK (69 aa)).

The protein localises to the nucleus. In Alligator mississippiensis (American alligator), this protein is SRY-related protein AES2.